Here is a 447-residue protein sequence, read N- to C-terminus: N-succinylarginine dihydrolase (447 aa).

Substrate is bound by residues 19 to 28, asparagine 110, and 137 to 138; these read AGLSFGNEAS and HR. Glutamate 174 is an active-site residue. Residue arginine 212 coordinates substrate. The active site involves histidine 248. Positions 250 and 359 each coordinate substrate. Residue cysteine 365 is the Nucleophile of the active site.

This sequence belongs to the succinylarginine dihydrolase family. As to quaternary structure, homodimer.

It carries out the reaction N(2)-succinyl-L-arginine + 2 H2O + 2 H(+) = N(2)-succinyl-L-ornithine + 2 NH4(+) + CO2. It participates in amino-acid degradation; L-arginine degradation via AST pathway; L-glutamate and succinate from L-arginine: step 2/5. Functionally, catalyzes the hydrolysis of N(2)-succinylarginine into N(2)-succinylornithine, ammonia and CO(2). The protein is N-succinylarginine dihydrolase of Salmonella heidelberg (strain SL476).